We begin with the raw amino-acid sequence, 429 residues long: Glutamate-1-semialdehyde 2,1-aminomutase (429 aa).

An N6-(pyridoxal phosphate)lysine modification is found at lysine 267.

This sequence belongs to the class-III pyridoxal-phosphate-dependent aminotransferase family. HemL subfamily. In terms of assembly, homodimer. It depends on pyridoxal 5'-phosphate as a cofactor.

The protein resides in the cytoplasm. It catalyses the reaction (S)-4-amino-5-oxopentanoate = 5-aminolevulinate. It functions in the pathway porphyrin-containing compound metabolism; protoporphyrin-IX biosynthesis; 5-aminolevulinate from L-glutamyl-tRNA(Glu): step 2/2. The protein is Glutamate-1-semialdehyde 2,1-aminomutase of Herpetosiphon aurantiacus (strain ATCC 23779 / DSM 785 / 114-95).